The sequence spans 218 residues: MSFVGENSGVKMGSEDWEKDEPQCCLEDPAGSPLEPGPSLPTMNFVHTSPKVKNLNPKKFSIHDQDHKVLVLDSGNLIAVPDKNYIRPEIFFALASSLSSASAEKGSPILLGVSKGEFCLYCDKDKGQSHPSLQLKKEKLMKLAAQKESARRPFIFYRAQVGSWNMLESAAHPGWFICTSCNCNEPVGVTDKFENRKHIEFSFQPVCKAEMSPSEVSD.

Positions 1-40 are disordered; it reads MSFVGENSGVKMGSEDWEKDEPQCCLEDPAGSPLEPGPSL. Residues 1 to 45 constitute a propeptide, removed in mature form; it reads MSFVGENSGVKMGSEDWEKDEPQCCLEDPAGSPLEPGPSLPTMNF. Residues 13–22 show a composition bias toward basic and acidic residues; it reads GSEDWEKDEP.

Belongs to the IL-1 family. As to quaternary structure, interacts with SMAD3. Binds IL18R1, but not to IL1R1, with lower affinity than IL18, and does not seem to act as a receptor antagonist for IL18. Interacts with cargo receptor TMED10; the interaction mediates the translocation from the cytoplasm into the ERGIC (endoplasmic reticulum-Golgi intermediate compartment) and thereby secretion. Proteolytically converted to the mature form by CASP1. In general, low constitutive expression, if any, in healthy tissues; high expression in inflammatory counterparts, including in synovial tissues from individuals with active rheumatoid arthritis. Isoform A, isoform B and isoform C are expressed in testis, colon, placenta, lung and lymph node. Isoform D and isoform E were found only in testis and bone marrow. Whereas only isoform A is found in brain, only isoform B in kidney and only isoform C in heart.

It is found in the cytoplasm. The protein localises to the cytosol. The protein resides in the nucleus. It localises to the secreted. Immune regulatory cytokine that acts as a suppressor of innate inflammatory and immune responses involved in curbing excessive inflammation. Signaling can occur via two mechanisms, intracellularly through nuclear translocation with SMAD3 and extracellularly after secretion and binding to its receptor composed of IL18R1 and IL18RAP. Suppresses, or reduces, pro-inflammatory cytokine production, including IL1A and IL6, as well as CCL12, CSF1, CSF2, CXCL13, IL1B, IL23A and IL1RN, but spares anti-inflammatory cytokines. Inhibits dendritic cell activation. In Homo sapiens (Human), this protein is Interleukin-37.